A 341-amino-acid polypeptide reads, in one-letter code: Tryptophan--tRNA ligase (341 aa).

ATP-binding positions include arginine 11 to threonine 13 and glycine 19 to histidine 20. Residues proline 12 to histidine 20 carry the 'HIGH' region motif. Residue aspartate 140 participates in L-tryptophan binding. ATP-binding positions include glycine 152–aspartate 154, leucine 194, and lysine 202–serine 206. The 'KMSKS' region signature appears at lysine 202–serine 206.

It belongs to the class-I aminoacyl-tRNA synthetase family. As to quaternary structure, homodimer.

It is found in the cytoplasm. It catalyses the reaction tRNA(Trp) + L-tryptophan + ATP = L-tryptophyl-tRNA(Trp) + AMP + diphosphate + H(+). Catalyzes the attachment of tryptophan to tRNA(Trp). This chain is Tryptophan--tRNA ligase, found in Streptococcus agalactiae serotype III (strain NEM316).